The sequence spans 322 residues: Extracellular metalloprotease AFUB_008060 (322 aa).

The first 22 residues, 1-22 (MLPFNSCVYVLLIISLMSNCRA), serve as a signal peptide directing secretion. Asn123 and Asn197 each carry an N-linked (GlcNAc...) asparagine glycan. Position 233 (His233) interacts with Zn(2+). Glu234 is a catalytic residue. Residue His237 coordinates Zn(2+). Cys272 and Cys299 are oxidised to a cystine.

This sequence belongs to the peptidase M43B family.

It is found in the secreted. Functionally, secreted metalloproteinase that allows assimilation of proteinaceous substrates. Plays a pivotal role as a pathogenicity determinant during infections and contributes to the ability of the pathogen to persist within the mammalian host. The chain is Extracellular metalloprotease AFUB_008060 from Aspergillus fumigatus (strain CBS 144.89 / FGSC A1163 / CEA10) (Neosartorya fumigata).